Here is a 257-residue protein sequence, read N- to C-terminus: UPF0246 protein Mpe_A2092 (257 aa).

This sequence belongs to the UPF0246 family.

The chain is UPF0246 protein Mpe_A2092 from Methylibium petroleiphilum (strain ATCC BAA-1232 / LMG 22953 / PM1).